The chain runs to 409 residues: F-box protein At3g17320 (409 aa).

Residues 1-47 enclose the F-box domain; sequence MTKISDLPRDLAEEVLSRVPVTYLRAIRFTCKKWNTLTKRRSFTKKL.

In Arabidopsis thaliana (Mouse-ear cress), this protein is F-box protein At3g17320.